A 581-amino-acid polypeptide reads, in one-letter code: Adenine deaminase (581 aa).

The protein belongs to the metallo-dependent hydrolases superfamily. Adenine deaminase family. Requires Mn(2+) as cofactor.

It catalyses the reaction adenine + H2O + H(+) = hypoxanthine + NH4(+). The sequence is that of Adenine deaminase from Clostridium botulinum (strain Eklund 17B / Type B).